Consider the following 179-residue polypeptide: Interleukin-10 (179 aa).

A signal peptide spans 1 to 19 (MPSPALLCCCLVLLAGVGA). 2 disulfides stabilise this stretch: Cys31/Cys127 and Cys81/Cys133. An N-linked (GlcNAc...) asparagine glycan is attached at Asn135.

The protein belongs to the IL-10 family. Homodimer. Interacts with IL10RA and IL10RB.

The protein localises to the secreted. In terms of biological role, major immune regulatory cytokine that acts on many cells of the immune system where it has profound anti-inflammatory functions, limiting excessive tissue disruption caused by inflammation. Mechanistically, IL10 binds to its heterotetrameric receptor comprising IL10RA and IL10RB leading to JAK1 and STAT2-mediated phosphorylation of STAT3. In turn, STAT3 translocates to the nucleus where it drives expression of anti-inflammatory mediators. Targets antigen-presenting cells (APCs) such as macrophages and monocytes and inhibits their release of pro-inflammatory cytokines including granulocyte-macrophage colony-stimulating factor /GM-CSF, granulocyte colony-stimulating factor/G-CSF, IL-1 alpha, IL-1 beta, IL-6, IL-8 and TNF-alpha. Also interferes with antigen presentation by reducing the expression of MHC-class II and co-stimulatory molecules, thereby inhibiting their ability to induce T cell activation. In addition, controls the inflammatory response of macrophages by reprogramming essential metabolic pathways including mTOR signaling. This Vulpes vulpes (Red fox) protein is Interleukin-10 (IL10).